A 418-amino-acid chain; its full sequence is Serine hydroxymethyltransferase (418 aa).

(6S)-5,6,7,8-tetrahydrofolate-binding positions include Leu-121 and 125-127 (GHL). Position 230 is an N6-(pyridoxal phosphate)lysine (Lys-230). (6S)-5,6,7,8-tetrahydrofolate is bound at residue 355 to 357 (SPF).

The protein belongs to the SHMT family. As to quaternary structure, homodimer. The cofactor is pyridoxal 5'-phosphate.

It is found in the cytoplasm. It carries out the reaction (6R)-5,10-methylene-5,6,7,8-tetrahydrofolate + glycine + H2O = (6S)-5,6,7,8-tetrahydrofolate + L-serine. The protein operates within one-carbon metabolism; tetrahydrofolate interconversion. It participates in amino-acid biosynthesis; glycine biosynthesis; glycine from L-serine: step 1/1. Functionally, catalyzes the reversible interconversion of serine and glycine with tetrahydrofolate (THF) serving as the one-carbon carrier. This reaction serves as the major source of one-carbon groups required for the biosynthesis of purines, thymidylate, methionine, and other important biomolecules. Also exhibits THF-independent aldolase activity toward beta-hydroxyamino acids, producing glycine and aldehydes, via a retro-aldol mechanism. The sequence is that of Serine hydroxymethyltransferase from Streptococcus agalactiae serotype V (strain ATCC BAA-611 / 2603 V/R).